A 227-amino-acid polypeptide reads, in one-letter code: MKINFLTLFPNYFSPFTEESIIAKAIENKLIDINIVDFRLFSLDKHHKVDDETYGGGQGMLLQIEPIDRALDSLESRGGYKILVSPQGKVFNQQKARELSKFDQITFISGRYEGFDERVTELVDEELSIGDYVLTGGELPSMVMADSIIRLIDNVIRKESHEYESFEGDGLLDYPQYTRPREYKGMSVPDVLLNGNHAEIEKWRKEAKYKKTLKNRPDIIERINHEK.

S-adenosyl-L-methionine is bound by residues G110 and 129-134 (IGDYVL).

The protein belongs to the RNA methyltransferase TrmD family. Homodimer.

The protein resides in the cytoplasm. The catalysed reaction is guanosine(37) in tRNA + S-adenosyl-L-methionine = N(1)-methylguanosine(37) in tRNA + S-adenosyl-L-homocysteine + H(+). Specifically methylates guanosine-37 in various tRNAs. The protein is tRNA (guanine-N(1)-)-methyltransferase of Mycoplasmopsis agalactiae (strain NCTC 10123 / CIP 59.7 / PG2) (Mycoplasma agalactiae).